The chain runs to 72 residues: Conotoxin im23a (72 aa).

Positions 1–22 are cleaved as a signal peptide; that stretch reads MIMRMTLTLFVLVVMTAASASG. The propeptide occupies 23–28; it reads DALTEA. Cystine bridges form between Cys34/Cys41, Cys45/Cys55, and Cys56/Cys71.

The protein belongs to the conotoxin K superfamily. As to expression, expressed by the venom duct.

The protein resides in the secreted. In terms of biological role, neurotoxin that induces excitatory symptoms in mice following intracranial administration. No symptoms are observed after intraperitoneal and intravenous (tail vein) injections. The sequence is that of Conotoxin im23a from Conus imperialis (Imperial cone).